Here is a 381-residue protein sequence, read N- to C-terminus: Probable cyclic AMP-AMP-GMP nucleotide synthase (381 aa).

Residues serine 53 and arginine 56 each coordinate GTP. Catalysis depends on residues aspartate 69 and aspartate 71. Aspartate 69 and aspartate 71 together coordinate Mg(2+). Arginine 109 lines the GTP pocket. Aspartate 121 is an active-site residue. Mg(2+)-binding residues include aspartate 121 and aspartate 196. 5 residues coordinate GTP: arginine 197, arginine 204, threonine 205, glutamine 210, and arginine 307. Positions 348–381 (GTKFPFPGPQGGDRSGGFTAPTQPAEPQKTGRFA) are disordered.

The protein belongs to the CD-NTase family. D02 subfamily. Requires Mg(2+) as cofactor.

It catalyses the reaction GTP + 2 ATP = 3',3',3'-cAAG + 3 diphosphate. Its function is as follows. Cyclic nucleotide synthase (second messenger synthase) of a CBASS antivirus system. CBASS (cyclic oligonucleotide-based antiphage signaling system) provides immunity against bacteriophage. The CD-NTase protein synthesizes cyclic nucleotides in response to infection; these serve as specific second messenger signals. The signals activate a diverse range of effectors, leading to bacterial cell death and thus abortive phage infection. Functionally, cyclic nucleotide synthase, synthesizes a tricyclic nucleotide with AMP and GMP moieties, probably 3',3',3'-cyclic AMP-AMP-GMP (3'3'3'-cAAG). Controls the activity of the associated CBASS effector protein. The sequence is that of Probable cyclic AMP-AMP-GMP nucleotide synthase from Salmonella paratyphi B (Salmonella enterica subsp. enterica serovar Paratyphi B).